The primary structure comprises 152 residues: MFRGATMVNLDSKGRLAVPTRYRESLNEESQGQMVCTIDLHQPCLLLYPLPEWEIIEQKLSRLSSMNPAERRVQRLLLGHASECQMDGAGRLLIAGTLRQHAGLNKEVMLVGQFNKFELWDEQTWYQQVKDDIDAEQSTQEPLSERLQDLSL.

SpoVT-AbrB domains are found at residues 5-52 (ATMV…PLPE) and 81-124 (ASEC…DEQT).

The protein belongs to the MraZ family. Forms oligomers.

It is found in the cytoplasm. The protein localises to the nucleoid. Functionally, negatively regulates its own expression and that of the subsequent genes in the proximal part of the division and cell wall (dcw) gene cluster. Acts by binding directly to DNA. May also regulate the expression of genes outside the dcw cluster. This Yersinia pseudotuberculosis serotype O:1b (strain IP 31758) protein is Transcriptional regulator MraZ.